The following is a 239-amino-acid chain: uncharacterized protein (239 aa).

The N-terminal stretch at 1–23 (MKTMVAMLLAAVGVAVSASSTLA) is a signal peptide. A compositionally biased stretch (basic and acidic residues) spans 220–230 (AHPKQTLRDQR). The interval 220 to 239 (AHPKQTLRDQRPAGGDEITK) is disordered.

This is an uncharacterized protein from Sinorhizobium fredii (strain NBRC 101917 / NGR234).